A 314-amino-acid polypeptide reads, in one-letter code: Nodulation protein D 2 (314 aa).

The HTH lysR-type domain maps to 6–63; that stretch reads LDLNLLVVLDALMTERNLTAAARSINLSQPAMSAAVARLRTNFRDDLFAMAGREFIPT. A DNA-binding region (H-T-H motif) is located at residues 23–42; sequence LTAAARSINLSQPAMSAAVA.

Belongs to the LysR transcriptional regulatory family.

Its function is as follows. NodD regulates the expression of the nodABCFE genes which encode other nodulation proteins. NodD is also a negative regulator of its own expression. Binds flavonoids as inducers. This is Nodulation protein D 2 (nodD2) from Rhizobium tropici.